Reading from the N-terminus, the 74-residue chain is Protein DELETION OF SUV3 SUPPRESSOR 1(I) (74 aa).

Positions 35 to 74 (EKEEVKEVSQQWEDDWDDDDVNDDFSRQLRKELENGTDKK) are disordered. Positions 46 to 57 (WEDDWDDDDVND) are enriched in acidic residues. Over residues 58 to 74 (DFSRQLRKELENGTDKK) the composition is skewed to basic and acidic residues.

The protein belongs to the DSS1/SEM1 family. In terms of assembly, part of the 26S proteasome. Interacts with BRCA2A and BRCA2B. Interacts with UCH1 and UCH2. Can form a tripartite complex with both RAD51 and BRCA2B or both DMC1 and BRCA2B.

Its function is as follows. Subunit of the 26S proteasome which plays a role in ubiquitin-dependent proteolysis. The polypeptide is Protein DELETION OF SUV3 SUPPRESSOR 1(I) (Arabidopsis thaliana (Mouse-ear cress)).